The primary structure comprises 388 residues: Large ribosomal subunit protein uL3A (388 aa).

Residues 1 to 10 are compositionally biased toward basic and acidic residues; the sequence is MSHCKFEQPR. The interval 1-34 is disordered; the sequence is MSHCKFEQPRHGSLGFLPRKRASRQRGKVKAFPK. Ser13 carries the phosphoserine modification. Positions 18–31 are enriched in basic residues; sequence PRKRASRQRGKVKA. Phosphoserine occurs at positions 65, 140, 143, 207, 295, and 355. At Thr372 the chain carries Phosphothreonine.

The protein belongs to the universal ribosomal protein uL3 family. In terms of assembly, component of the large ribosomal subunit (LSU). Mature yeast ribosomes consist of a small (40S) and a large (60S) subunit. The 40S small subunit contains 1 molecule of ribosomal RNA (18S rRNA) and at least 33 different proteins. The large 60S subunit contains 3 rRNA molecules (25S, 5.8S and 5S rRNA) and at least 46 different proteins. uL3 forms together with ES39L one of the contact sites for the signal recognition particle that targets ribosomes to the endoplasmic reticulum membrane.

It localises to the cytoplasm. In terms of biological role, component of the ribosome, a large ribonucleoprotein complex responsible for the synthesis of proteins in the cell. The small ribosomal subunit (SSU) binds messenger RNAs (mRNAs) and translates the encoded message by selecting cognate aminoacyl-transfer RNA (tRNA) molecules. The large subunit (LSU) contains the ribosomal catalytic site termed the peptidyl transferase center (PTC), which catalyzes the formation of peptide bonds, thereby polymerizing the amino acids delivered by tRNAs into a polypeptide chain. The nascent polypeptides leave the ribosome through a tunnel in the LSU and interact with protein factors that function in enzymatic processing, targeting, and the membrane insertion of nascent chains at the exit of the ribosomal tunnel. uL3 plays a role in coordinating processes of accommodating the aminoacyl-tRNA in the PTC. The polypeptide is Large ribosomal subunit protein uL3A (rpl301) (Schizosaccharomyces pombe (strain 972 / ATCC 24843) (Fission yeast)).